Reading from the N-terminus, the 187-residue chain is Elongation factor P (187 aa).

This sequence belongs to the elongation factor P family.

It is found in the cytoplasm. It functions in the pathway protein biosynthesis; polypeptide chain elongation. Its function is as follows. Involved in peptide bond synthesis. Stimulates efficient translation and peptide-bond synthesis on native or reconstituted 70S ribosomes in vitro. Probably functions indirectly by altering the affinity of the ribosome for aminoacyl-tRNA, thus increasing their reactivity as acceptors for peptidyl transferase. The protein is Elongation factor P of Corynebacterium aurimucosum (strain ATCC 700975 / DSM 44827 / CIP 107346 / CN-1) (Corynebacterium nigricans).